We begin with the raw amino-acid sequence, 723 residues long: Catalase-peroxidase (723 aa).

The tryptophyl-tyrosyl-methioninium (Trp-Tyr) (with M-251) cross-link spans 97–225 (WHAAGSYRVT…LAAVQMGLIY (129 aa)). H98 serves as the catalytic Proton acceptor. Residues 225-251 (YVNPEGVNGKSDPLATAAQMRETFARM) constitute a cross-link (tryptophyl-tyrosyl-methioninium (Tyr-Met) (with W-97)). A heme b-binding site is contributed by H266.

Belongs to the peroxidase family. Peroxidase/catalase subfamily. As to quaternary structure, homodimer or homotetramer. Requires heme b as cofactor. Formation of the three residue Trp-Tyr-Met cross-link is important for the catalase, but not the peroxidase activity of the enzyme.

The enzyme catalyses H2O2 + AH2 = A + 2 H2O. The catalysed reaction is 2 H2O2 = O2 + 2 H2O. Functionally, bifunctional enzyme with both catalase and broad-spectrum peroxidase activity. Involved in tumorigenesis. The chain is Catalase-peroxidase from Rhizobium radiobacter (Agrobacterium tumefaciens).